The following is a 185-amino-acid chain: Orotate phosphoribosyltransferase (185 aa).

5-phospho-alpha-D-ribose 1-diphosphate-binding positions include Arg-94, Lys-95, Lys-98, His-100, and 120 to 128 (EDVTTTGGS). The orotate site is built by Thr-124 and Arg-152.

Belongs to the purine/pyrimidine phosphoribosyltransferase family. PyrE subfamily. In terms of assembly, homodimer. It depends on Mg(2+) as a cofactor.

It catalyses the reaction orotidine 5'-phosphate + diphosphate = orotate + 5-phospho-alpha-D-ribose 1-diphosphate. It functions in the pathway pyrimidine metabolism; UMP biosynthesis via de novo pathway; UMP from orotate: step 1/2. Functionally, catalyzes the transfer of a ribosyl phosphate group from 5-phosphoribose 1-diphosphate to orotate, leading to the formation of orotidine monophosphate (OMP). This chain is Orotate phosphoribosyltransferase, found in Thermococcus kodakarensis (strain ATCC BAA-918 / JCM 12380 / KOD1) (Pyrococcus kodakaraensis (strain KOD1)).